A 384-amino-acid polypeptide reads, in one-letter code: Tryptophan--tRNA ligase (384 aa).

The 'HIGH' region motif lies at 81–89; it reads PSGPMHIGH. A 'KMSKS' region motif is present at residues 252 to 256; it reads KMSAS.

It belongs to the class-I aminoacyl-tRNA synthetase family.

Its subcellular location is the cytoplasm. The enzyme catalyses tRNA(Trp) + L-tryptophan + ATP = L-tryptophyl-tRNA(Trp) + AMP + diphosphate + H(+). This is Tryptophan--tRNA ligase from Thermococcus onnurineus (strain NA1).